A 254-amino-acid chain; its full sequence is Aspartate/glutamate leucyltransferase (254 aa).

This sequence belongs to the R-transferase family. Bpt subfamily.

The protein localises to the cytoplasm. The enzyme catalyses N-terminal L-glutamyl-[protein] + L-leucyl-tRNA(Leu) = N-terminal L-leucyl-L-glutamyl-[protein] + tRNA(Leu) + H(+). It catalyses the reaction N-terminal L-aspartyl-[protein] + L-leucyl-tRNA(Leu) = N-terminal L-leucyl-L-aspartyl-[protein] + tRNA(Leu) + H(+). Functionally, functions in the N-end rule pathway of protein degradation where it conjugates Leu from its aminoacyl-tRNA to the N-termini of proteins containing an N-terminal aspartate or glutamate. This chain is Aspartate/glutamate leucyltransferase, found in Maricaulis maris (strain MCS10) (Caulobacter maris).